The chain runs to 448 residues: Na(+)-translocating NADH-quinone reductase subunit A (448 aa).

Belongs to the NqrA family. Composed of six subunits; NqrA, NqrB, NqrC, NqrD, NqrE and NqrF.

The catalysed reaction is a ubiquinone + n Na(+)(in) + NADH + H(+) = a ubiquinol + n Na(+)(out) + NAD(+). NQR complex catalyzes the reduction of ubiquinone-1 to ubiquinol by two successive reactions, coupled with the transport of Na(+) ions from the cytoplasm to the periplasm. NqrA to NqrE are probably involved in the second step, the conversion of ubisemiquinone to ubiquinol. This is Na(+)-translocating NADH-quinone reductase subunit A from Alcanivorax borkumensis (strain ATCC 700651 / DSM 11573 / NCIMB 13689 / SK2).